The sequence spans 427 residues: Histidinol dehydrogenase (427 aa).

The substrate site is built by serine 232, glutamine 254, and histidine 257. 2 residues coordinate Zn(2+): glutamine 254 and histidine 257. Residues glutamate 322 and histidine 323 each act as proton acceptor in the active site. 4 residues coordinate substrate: histidine 323, aspartate 356, glutamate 410, and histidine 415. Residue aspartate 356 coordinates Zn(2+). Histidine 415 serves as a coordination point for Zn(2+).

Belongs to the histidinol dehydrogenase family. Zn(2+) serves as cofactor.

The catalysed reaction is L-histidinol + 2 NAD(+) + H2O = L-histidine + 2 NADH + 3 H(+). It participates in amino-acid biosynthesis; L-histidine biosynthesis; L-histidine from 5-phospho-alpha-D-ribose 1-diphosphate: step 9/9. In terms of biological role, catalyzes the sequential NAD-dependent oxidations of L-histidinol to L-histidinaldehyde and then to L-histidine. This Listeria innocua serovar 6a (strain ATCC BAA-680 / CLIP 11262) protein is Histidinol dehydrogenase.